Reading from the N-terminus, the 97-residue chain is Conotoxin Cal6.1b (97 aa).

The first 22 residues, 1–22 (MKLTTVLVVALLVLAACQFTVT), serve as a signal peptide directing secretion. The disordered stretch occupies residues 22–46 (TDNSGDDPENPSLRSAGENQNPDST). Positions 23-68 (DNSGDDPENPSLRSAGENQNPDSTKTITAWATRDMTNMRRGLNRPS) are excised as a propeptide. 3 disulfide bridges follow: cysteine 71/cysteine 87, cysteine 78/cysteine 91, and cysteine 86/cysteine 96.

Belongs to the conotoxin O1 superfamily. In terms of tissue distribution, expressed by the venom duct.

Its subcellular location is the secreted. Functionally, probable neurotoxin with unknown target. Possibly targets ion channels. This chain is Conotoxin Cal6.1b, found in Californiconus californicus (California cone).